Here is a 471-residue protein sequence, read N- to C-terminus: 3-isopropylmalate dehydratase large subunit (471 aa).

[4Fe-4S] cluster contacts are provided by cysteine 347, cysteine 407, and cysteine 410.

The protein belongs to the aconitase/IPM isomerase family. LeuC type 1 subfamily. As to quaternary structure, heterodimer of LeuC and LeuD. The cofactor is [4Fe-4S] cluster.

It catalyses the reaction (2R,3S)-3-isopropylmalate = (2S)-2-isopropylmalate. It participates in amino-acid biosynthesis; L-leucine biosynthesis; L-leucine from 3-methyl-2-oxobutanoate: step 2/4. Its function is as follows. Catalyzes the isomerization between 2-isopropylmalate and 3-isopropylmalate, via the formation of 2-isopropylmaleate. This Edwardsiella ictaluri (strain 93-146) protein is 3-isopropylmalate dehydratase large subunit.